The following is a 164-amino-acid chain: Transcription elongation factor GreA (164 aa).

The stretch at 50–76 (YHAAREEQGQQEARIRQLQDLLSNAKV) forms a coiled coil.

Belongs to the GreA/GreB family.

Its function is as follows. Necessary for efficient RNA polymerase transcription elongation past template-encoded arresting sites. The arresting sites in DNA have the property of trapping a certain fraction of elongating RNA polymerases that pass through, resulting in locked ternary complexes. Cleavage of the nascent transcript by cleavage factors such as GreA or GreB allows the resumption of elongation from the new 3'terminus. GreA releases sequences of 2 to 3 nucleotides. The sequence is that of Transcription elongation factor GreA from Mycobacterium bovis (strain ATCC BAA-935 / AF2122/97).